Consider the following 350-residue polypeptide: Heat-inducible transcription repressor HrcA (350 aa).

Belongs to the HrcA family.

Functionally, negative regulator of class I heat shock genes (grpE-dnaK-dnaJ and groELS operons). Prevents heat-shock induction of these operons. In Xanthomonas campestris pv. campestris (strain ATCC 33913 / DSM 3586 / NCPPB 528 / LMG 568 / P 25), this protein is Heat-inducible transcription repressor HrcA.